Here is a 69-residue protein sequence, read N- to C-terminus: Large ribosomal subunit protein bL31 (69 aa).

Zn(2+)-binding residues include Cys16, Cys18, Cys36, and Cys39.

This sequence belongs to the bacterial ribosomal protein bL31 family. Type A subfamily. As to quaternary structure, part of the 50S ribosomal subunit. It depends on Zn(2+) as a cofactor.

Its function is as follows. Binds the 23S rRNA. The chain is Large ribosomal subunit protein bL31 from Thermosipho africanus (strain TCF52B).